The primary structure comprises 521 residues: Bifunctional purine biosynthesis protein PurH (521 aa).

The region spanning 1–145 (MIKQALISVS…KNHRDVTVVV (145 aa)) is the MGS-like domain.

Belongs to the PurH family.

The catalysed reaction is (6R)-10-formyltetrahydrofolate + 5-amino-1-(5-phospho-beta-D-ribosyl)imidazole-4-carboxamide = 5-formamido-1-(5-phospho-D-ribosyl)imidazole-4-carboxamide + (6S)-5,6,7,8-tetrahydrofolate. It catalyses the reaction IMP + H2O = 5-formamido-1-(5-phospho-D-ribosyl)imidazole-4-carboxamide. It participates in purine metabolism; IMP biosynthesis via de novo pathway; 5-formamido-1-(5-phospho-D-ribosyl)imidazole-4-carboxamide from 5-amino-1-(5-phospho-D-ribosyl)imidazole-4-carboxamide (10-formyl THF route): step 1/1. The protein operates within purine metabolism; IMP biosynthesis via de novo pathway; IMP from 5-formamido-1-(5-phospho-D-ribosyl)imidazole-4-carboxamide: step 1/1. In Burkholderia cenocepacia (strain HI2424), this protein is Bifunctional purine biosynthesis protein PurH.